A 414-amino-acid polypeptide reads, in one-letter code: Serine hydroxymethyltransferase (414 aa).

(6S)-5,6,7,8-tetrahydrofolate is bound by residues L117 and 121-123; that span reads GHL. K226 is subject to N6-(pyridoxal phosphate)lysine. 349–351 lines the (6S)-5,6,7,8-tetrahydrofolate pocket; it reads SPF.

The protein belongs to the SHMT family. Homodimer. Requires pyridoxal 5'-phosphate as cofactor.

The protein resides in the cytoplasm. The enzyme catalyses (6R)-5,10-methylene-5,6,7,8-tetrahydrofolate + glycine + H2O = (6S)-5,6,7,8-tetrahydrofolate + L-serine. Its pathway is one-carbon metabolism; tetrahydrofolate interconversion. It participates in amino-acid biosynthesis; glycine biosynthesis; glycine from L-serine: step 1/1. In terms of biological role, catalyzes the reversible interconversion of serine and glycine with tetrahydrofolate (THF) serving as the one-carbon carrier. Also exhibits THF-independent aldolase activity toward beta-hydroxyamino acids, producing glycine and aldehydes, via a retro-aldol mechanism. This Methanospirillum hungatei JF-1 (strain ATCC 27890 / DSM 864 / NBRC 100397 / JF-1) protein is Serine hydroxymethyltransferase.